A 308-amino-acid polypeptide reads, in one-letter code: Ornithine carbamoyltransferase (308 aa).

Carbamoyl phosphate contacts are provided by residues arginine 103 and 130-133 (HPAQ). L-ornithine-binding positions include asparagine 162, aspartate 221, and 225-226 (SM). Carbamoyl phosphate-binding positions include 261–262 (CL) and arginine 289.

Belongs to the aspartate/ornithine carbamoyltransferase superfamily. OTCase family.

It localises to the cytoplasm. It catalyses the reaction carbamoyl phosphate + L-ornithine = L-citrulline + phosphate + H(+). It participates in amino-acid biosynthesis; L-arginine biosynthesis; L-arginine from L-ornithine and carbamoyl phosphate: step 1/3. Functionally, reversibly catalyzes the transfer of the carbamoyl group from carbamoyl phosphate (CP) to the N(epsilon) atom of ornithine (ORN) to produce L-citrulline. In Deinococcus radiodurans (strain ATCC 13939 / DSM 20539 / JCM 16871 / CCUG 27074 / LMG 4051 / NBRC 15346 / NCIMB 9279 / VKM B-1422 / R1), this protein is Ornithine carbamoyltransferase.